Reading from the N-terminus, the 27-residue chain is uncharacterized protein (27 aa).

Its subcellular location is the mitochondrion. This is an uncharacterized protein from Emericella nidulans (Aspergillus nidulans).